A 385-amino-acid chain; its full sequence is S-adenosylmethionine synthase (385 aa).

Residue His15 coordinates ATP. Asp17 contributes to the Mg(2+) binding site. A K(+)-binding site is contributed by Glu43. The L-methionine site is built by Glu56 and Gln99. The segment at 99-109 is flexible loop; sequence QSPDINQGVDR. ATP-binding positions include 164–166, 230–231, Asp239, 245–246, Ala262, and Lys266; these read DAK, RF, and RK. Asp239 provides a ligand contact to L-methionine. Lys270 lines the L-methionine pocket.

The protein belongs to the AdoMet synthase family. In terms of assembly, homotetramer; dimer of dimers. Requires Mg(2+) as cofactor. K(+) serves as cofactor.

It localises to the cytoplasm. The enzyme catalyses L-methionine + ATP + H2O = S-adenosyl-L-methionine + phosphate + diphosphate. It functions in the pathway amino-acid biosynthesis; S-adenosyl-L-methionine biosynthesis; S-adenosyl-L-methionine from L-methionine: step 1/1. In terms of biological role, catalyzes the formation of S-adenosylmethionine (AdoMet) from methionine and ATP. The overall synthetic reaction is composed of two sequential steps, AdoMet formation and the subsequent tripolyphosphate hydrolysis which occurs prior to release of AdoMet from the enzyme. This is S-adenosylmethionine synthase from Sodalis glossinidius (strain morsitans).